The following is a 323-amino-acid chain: MIEFGNFYQLIAKNHLSHWLETLPAQIAAWQREQQHGLFKQWSNAVEFLPEMTPWRLDLLHSVTAESETPLSEGQLKRIDTLLRNLMPWRKGPFSLYGVDIDTEWRSDWKWDRVLPHLSDLTGRTILDVGCGSGYHLWRMIGAGAHLAVGIDPTQLFLCQFEAVRKLLGNDQRAHLLPLGIEQLPALKAFDTVFSMGVLYHRRSPLEHLWQLKDQLVNEGELVLETLVVDGDENTVLVPGDRYAQMRNVYFIPSAPALKKWLEKCGFIDVRIADVCVTTTEEQRRTEWMVTESLADFLDPNDRSKTVEGYPAPQRAVLIARKP.

Carboxy-S-adenosyl-L-methionine contacts are provided by residues K91, W105, K110, G130, 152 to 154 (DPT), 181 to 182 (IE), M196, Y200, and R315.

Belongs to the class I-like SAM-binding methyltransferase superfamily. CmoB family. As to quaternary structure, homotetramer.

It carries out the reaction carboxy-S-adenosyl-L-methionine + 5-hydroxyuridine(34) in tRNA = 5-carboxymethoxyuridine(34) in tRNA + S-adenosyl-L-homocysteine + H(+). Catalyzes carboxymethyl transfer from carboxy-S-adenosyl-L-methionine (Cx-SAM) to 5-hydroxyuridine (ho5U) to form 5-carboxymethoxyuridine (cmo5U) at position 34 in tRNAs. In Salmonella enteritidis PT4 (strain P125109), this protein is tRNA U34 carboxymethyltransferase.